Reading from the N-terminus, the 361-residue chain is Ribosomal RNA large subunit methyltransferase M (361 aa).

Residues Ser-187, 220-223 (CPGG), Asp-239, Asp-259, and Asp-276 each bind S-adenosyl-L-methionine. Lys-305 functions as the Proton acceptor in the catalytic mechanism.

It belongs to the class I-like SAM-binding methyltransferase superfamily. RNA methyltransferase RlmE family. RlmM subfamily. As to quaternary structure, monomer.

The protein resides in the cytoplasm. It carries out the reaction cytidine(2498) in 23S rRNA + S-adenosyl-L-methionine = 2'-O-methylcytidine(2498) in 23S rRNA + S-adenosyl-L-homocysteine + H(+). Its function is as follows. Catalyzes the 2'-O-methylation at nucleotide C2498 in 23S rRNA. This Shewanella sp. (strain MR-7) protein is Ribosomal RNA large subunit methyltransferase M.